The following is a 227-amino-acid chain: Putative N-acetylmannosamine-6-phosphate 2-epimerase (227 aa).

Belongs to the NanE family.

It carries out the reaction an N-acyl-D-glucosamine 6-phosphate = an N-acyl-D-mannosamine 6-phosphate. The protein operates within amino-sugar metabolism; N-acetylneuraminate degradation; D-fructose 6-phosphate from N-acetylneuraminate: step 3/5. Its function is as follows. Converts N-acetylmannosamine-6-phosphate (ManNAc-6-P) to N-acetylglucosamine-6-phosphate (GlcNAc-6-P). The polypeptide is Putative N-acetylmannosamine-6-phosphate 2-epimerase (Shouchella clausii (strain KSM-K16) (Alkalihalobacillus clausii)).